The primary structure comprises 251 residues: Extracellular superoxide dismutase [Cu-Zn] (251 aa).

The signal sequence occupies residues 1-15; that stretch reads MLAFLFYGLLLAACG. Residues 16–24 constitute a propeptide that is removed on maturation; it reads SVTMSNPGE. Cystine bridges form between cysteine 77/cysteine 222 and cysteine 139/cysteine 221. Asparagine 121 carries N-linked (GlcNAc...) asparagine glycosylation. Cu cation is bound by residues histidine 128, histidine 130, and histidine 145. Residues histidine 145, histidine 153, histidine 156, and aspartate 159 each contribute to the Zn(2+) site. Histidine 195 serves as a coordination point for Cu cation. Residues 230-251 are disordered; sequence AAWESQTKERKKRRRESECKTT.

This sequence belongs to the Cu-Zn superoxide dismutase family. In terms of assembly, homotetramer. Directly interacts with ATP7A/MNK; this interaction is copper-dependent and is required for SOD3 activity. It depends on Cu cation as a cofactor. Zn(2+) is required as a cofactor.

It is found in the secreted. Its subcellular location is the extracellular space. It localises to the golgi apparatus. The protein resides in the trans-Golgi network. The enzyme catalyses 2 superoxide + 2 H(+) = H2O2 + O2. Its function is as follows. Protect the extracellular space from toxic effect of reactive oxygen intermediates by converting superoxide radicals into hydrogen peroxide and oxygen. This is Extracellular superoxide dismutase [Cu-Zn] (Sod3) from Mus musculus (Mouse).